Here is a 325-residue protein sequence, read N- to C-terminus: Aquaporin-8 (325 aa).

Residues Met1–Tyr10 lie on the Cytoplasmic side of the membrane. A helical membrane pass occupies residues Leu11–Ala31. Topologically, residues Ala32–Ser52 are extracellular. N-linked (GlcNAc...) asparagine glycans are attached at residues Asn39 and Asn47. The chain crosses the membrane as a helical span at residues Lys53–Phe73. At Arg74–Leu100 the chain is on the cytoplasmic side. The NPA 1 signature appears at Asn81–Ala83. Residues Ile101–Ile121 traverse the membrane as a helical segment. Residues Pro122–Gln140 are Extracellular-facing. Residues Gly141–Ala161 traverse the membrane as a helical segment. The Cytoplasmic segment spans residues Glu162 to Thr167. A helical transmembrane segment spans residues Phe168–Trp188. The Extracellular segment spans residues Thr189–His212. The NPA 2 motif lies at Asn194–Ala196. A helical membrane pass occupies residues Trp213 to Leu233. The Cytoplasmic segment spans residues Lys234–Thr325. Disordered stretches follow at residues Leu279–Gly298 and Glu305–Thr325. Over residues Thr286–Gly298 the composition is skewed to basic and acidic residues.

It belongs to the MIP/aquaporin (TC 1.A.8) family.

It localises to the cell membrane. It catalyses the reaction H2O2(out) = H2O2(in). The enzyme catalyses H2O(in) = H2O(out). Plasma membrane water channel that regulates the reactive oxygen species (ROS)-signaling pathway through its capacity to act as a membrane channel for hydrogen peroxide uptake. Required for the formation of infection structures and infection, especially on host leaves where it is essential for the penetration into the host. Regulates the expression of proteins related to redox-regulation and intracellular signal transduction and plays a role in the distribution of mitochondria in the hyphae. This Botryotinia fuckeliana (strain B05.10) (Noble rot fungus) protein is Aquaporin-8.